A 304-amino-acid chain; its full sequence is Splicing factor U2af small subunit B (304 aa).

A C3H1-type 1 zinc finger spans residues E12–P40. The 103-residue stretch at P44–V146 folds into the RRM domain. The C3H1-type 2 zinc-finger motif lies at D148–Q175. Basic residues predominate over residues L184–N207. Positions L184–P304 are disordered. Positions R208–Y220 are enriched in basic and acidic residues. Gly residues predominate over residues R221–S258. Basic residues predominate over residues R268–S280. The span at P281–P304 shows a compositional bias: basic and acidic residues.

The protein belongs to the splicing factor SR family.

It localises to the nucleus. Necessary for the splicing of pre-mRNA. The chain is Splicing factor U2af small subunit B (U2AF35B) from Oryza sativa subsp. japonica (Rice).